Here is a 311-residue protein sequence, read N- to C-terminus: Porphobilinogen deaminase (311 aa).

Residue Cys-241 is modified to S-(dipyrrolylmethanemethyl)cysteine.

This sequence belongs to the HMBS family. In terms of assembly, monomer. Dipyrromethane serves as cofactor.

It carries out the reaction 4 porphobilinogen + H2O = hydroxymethylbilane + 4 NH4(+). It functions in the pathway porphyrin-containing compound metabolism; protoporphyrin-IX biosynthesis; coproporphyrinogen-III from 5-aminolevulinate: step 2/4. Functionally, tetrapolymerization of the monopyrrole PBG into the hydroxymethylbilane pre-uroporphyrinogen in several discrete steps. This is Porphobilinogen deaminase from Bacillus pumilus (strain SAFR-032).